A 904-amino-acid chain; its full sequence is NADH-quinone oxidoreductase subunit G (904 aa).

The 83-residue stretch at 1–83 (MATIHVDGKE…GSWISIDDEE (83 aa)) folds into the 2Fe-2S ferredoxin-type domain. [2Fe-2S] cluster is bound by residues Cys-34, Cys-45, Cys-48, and Cys-67. The 40-residue stretch at 83-122 (EAKVFRASVVEWLMTNHPHDCPVCEEGGHCHLQDMTVMTG) folds into the 4Fe-4S His(Cys)3-ligated-type domain. Positions 99, 103, 106, 112, 151, 154, 157, 201, 228, 231, 235, and 263 each coordinate [4Fe-4S] cluster. Positions 221-277 (MQFSPSICHGCSSGCNISPGERYGELRRIENRFNGSVNQYFLCDRGRFGYGYVNRKD) constitute a 4Fe-4S Mo/W bis-MGD-type domain.

The protein belongs to the complex I 75 kDa subunit family. Composed of 13 different subunits. Subunits NuoCD, E, F, and G constitute the peripheral sector of the complex. [2Fe-2S] cluster is required as a cofactor. [4Fe-4S] cluster serves as cofactor.

It catalyses the reaction a quinone + NADH + 5 H(+)(in) = a quinol + NAD(+) + 4 H(+)(out). NDH-1 shuttles electrons from NADH, via FMN and iron-sulfur (Fe-S) centers, to quinones in the respiratory chain. The immediate electron acceptor for the enzyme in this species is believed to be ubiquinone. Couples the redox reaction to proton translocation (for every two electrons transferred, four hydrogen ions are translocated across the cytoplasmic membrane), and thus conserves the redox energy in a proton gradient. Required for plants roots colonization. This is NADH-quinone oxidoreductase subunit G (nuoG) from Pseudomonas fluorescens.